A 353-amino-acid chain; its full sequence is tRNA N(3)-cytidine methyltransferase METTL2 (353 aa).

The tract at residues 1–37 (MAAPVVAADSPVIENMPETAGGATENSAEAQKRPQFG) is disordered. The S-adenosyl-L-methionine site is built by tryptophan 93, tyrosine 97, glycine 165, aspartate 190, aspartate 216, and isoleucine 237.

It belongs to the methyltransferase superfamily. METL family. As to quaternary structure, monomer.

The protein localises to the cytoplasm. The catalysed reaction is cytidine(32) in tRNA(Thr) + S-adenosyl-L-methionine = N(3)-methylcytidine(32) in tRNA(Thr) + S-adenosyl-L-homocysteine + H(+). It carries out the reaction cytidine(32) in tRNA(Arg)(CCU) + S-adenosyl-L-methionine = N(3)-methylcytidine(32) in tRNA(Arg)(CCU) + S-adenosyl-L-homocysteine + H(+). In terms of biological role, S-adenosyl-L-methionine-dependent methyltransferase that mediates N(3)-methylcytidine modification of residue 32 of the tRNA anticodon loop of tRNA(Thr)(UGU) and tRNA(Arg)(CCU). N(3)-methylcytidine methylation by mettl2a requires the N6-threonylcarbamoylation of tRNA (t6A37) by the EKC/KEOPS complex as prerequisite. The chain is tRNA N(3)-cytidine methyltransferase METTL2 (mettl2a) from Danio rerio (Zebrafish).